We begin with the raw amino-acid sequence, 1574 residues long: Plexin-C1 (1574 aa).

The signal sequence occupies residues 1 to 34 (MEVSRRKTPPRPPYPAAPLPLIAYLLALAAPARG). The 418-residue stretch at 35–452 (ADEPVWRSEQ…AGKEVRRIPV (418 aa)) folds into the Sema domain. Residues 35 to 950 (ADEPVWRSEQ…YVEQESVPST (916 aa)) are Extracellular-facing. C64 and C87 are joined by a disulfide. N-linked (GlcNAc...) asparagine glycans are attached at residues N86, N143, and N149. An intrachain disulfide couples C156 to C194. N-linked (GlcNAc...) asparagine glycosylation occurs at N252. An intrachain disulfide couples C283 to C329. Residues N386 and N407 are each glycosylated (N-linked (GlcNAc...) asparagine). Cystine bridges form between C455–C472, C461–C506, C464–C481, and C475–C487. Residues N694, N773, and N802 are each glycosylated (N-linked (GlcNAc...) asparagine). Residues 951 to 971 (WYFLIALPILLAIVIVVAVVV) form a helical membrane-spanning segment. Over 972–1574 (TRYKSKELSR…FDEKKKCKWM (603 aa)) the chain is Cytoplasmic. S984 is subject to Phosphoserine.

This sequence belongs to the plexin family. Monomer. Homodimer. Interacts with SEMA7A. As to expression, detected on dendritic cells, skin Langerhans cells and neutrophils (at protein level).

It is found in the membrane. Its function is as follows. Receptor for SEMA7A, for vaccinia virus semaphorin A39R and for herpesvirus Sema protein. Binding of semaphorins triggers cellular responses leading to the rearrangement of the cytoskeleton and to secretion of IL6 and IL8. The protein is Plexin-C1 (Plxnc1) of Mus musculus (Mouse).